The following is an 83-amino-acid chain: Cytochrome c oxidase subunit 7A2, mitochondrial (83 aa).

A mitochondrion-targeting transit peptide spans 1–23 (MLRNLLALRQIAKRTISTSSRRQ). Topologically, residues 24 to 48 (FENKVPEKQKLFQEDNGIPVHLKGG) are mitochondrial matrix. The residue at position 33 (lysine 33) is an N6-acetyllysine. A helical transmembrane segment spans residues 49 to 77 (IADALLYRATLILTVGGTAYAMYELAVAS). Topologically, residues 78–83 (FPKKQD) are mitochondrial intermembrane.

It belongs to the cytochrome c oxidase VIIa family. Component of the cytochrome c oxidase (complex IV, CIV), a multisubunit enzyme composed of 14 subunits. The complex is composed of a catalytic core of 3 subunits MT-CO1, MT-CO2 and MT-CO3, encoded in the mitochondrial DNA, and 11 supernumerary subunits COX4I1 (or COX4I2), COX5A, COX5B, COX6A2 (or COX6A1), COX6B1 (or COX6B2), COX6C, COX7A1 (or COX7A2), COX7B, COX7C, COX8B and NDUFA4, which are encoded in the nuclear genome. The complex exists as a monomer or a dimer and forms supercomplexes (SCs) in the inner mitochondrial membrane with NADH-ubiquinone oxidoreductase (complex I, CI) and ubiquinol-cytochrome c oxidoreductase (cytochrome b-c1 complex, complex III, CIII), resulting in different assemblies (supercomplex SCI(1)III(2)IV(1) and megacomplex MCI(2)III(2)IV(2)). Interacts with PET100.

It localises to the mitochondrion inner membrane. The protein operates within energy metabolism; oxidative phosphorylation. Functionally, component of the cytochrome c oxidase, the last enzyme in the mitochondrial electron transport chain which drives oxidative phosphorylation. The respiratory chain contains 3 multisubunit complexes succinate dehydrogenase (complex II, CII), ubiquinol-cytochrome c oxidoreductase (cytochrome b-c1 complex, complex III, CIII) and cytochrome c oxidase (complex IV, CIV), that cooperate to transfer electrons derived from NADH and succinate to molecular oxygen, creating an electrochemical gradient over the inner membrane that drives transmembrane transport and the ATP synthase. Cytochrome c oxidase is the component of the respiratory chain that catalyzes the reduction of oxygen to water. Electrons originating from reduced cytochrome c in the intermembrane space (IMS) are transferred via the dinuclear copper A center (CU(A)) of subunit 2 and heme A of subunit 1 to the active site in subunit 1, a binuclear center (BNC) formed by heme A3 and copper B (CU(B)). The BNC reduces molecular oxygen to 2 water molecules using 4 electrons from cytochrome c in the IMS and 4 protons from the mitochondrial matrix. This is Cytochrome c oxidase subunit 7A2, mitochondrial (COX7A2) from Bos taurus (Bovine).